Reading from the N-terminus, the 554-residue chain is RecBCD enzyme subunit RecD (554 aa).

Glycine 155–threonine 162 contributes to the ATP binding site.

Belongs to the RecD family. Heterotrimer of RecB, RecC and RecD. All subunits contribute to DNA-binding.

The catalysed reaction is Couples ATP hydrolysis with the unwinding of duplex DNA at the replication fork by translocating in the 5'-3' direction. This creates two antiparallel DNA single strands (ssDNA). The leading ssDNA polymer is the template for DNA polymerase III holoenzyme which synthesizes a continuous strand.. It carries out the reaction ATP + H2O = ADP + phosphate + H(+). Its function is as follows. A helicase/nuclease that prepares dsDNA breaks (DSB) for recombinational DNA repair. Binds to DSBs and unwinds DNA via a highly rapid and processive ATP-dependent bidirectional helicase activity. Holoenzyme degrades any linearized DNA that is unable to undergo homologous recombination. In the holoenzyme this subunit has ssDNA-dependent ATPase and 5'-3' helicase activity. When added to pre-assembled RecBC greatly stimulates nuclease activity and augments holoenzyme processivity. Unlike the case in E.coli, suppresses RecA-dependent homologous recombination, is instead required for single-strand annealing pathway repair of DSB. The polypeptide is RecBCD enzyme subunit RecD (Mycolicibacterium smegmatis (strain ATCC 700084 / mc(2)155) (Mycobacterium smegmatis)).